Consider the following 95-residue polypeptide: UPF0235 protein AnaeK_1146 (95 aa).

Belongs to the UPF0235 family.

This is UPF0235 protein AnaeK_1146 from Anaeromyxobacter sp. (strain K).